A 1755-amino-acid polypeptide reads, in one-letter code: Transposon Ty1-NL1 Gag-Pol polyprotein (1755 aa).

Composition is skewed to polar residues over residues 1–23 (MESQ…SVTS), 48–60 (TKAN…TPAS), 71–86 (SPQT…GPYQ), and 131–152 (PQYP…GNTF). Disordered stretches follow at residues 1-86 (MESQ…GPYQ), 131-171 (PQYP…YVRP), and 350-420 (QQES…IRGS). Over residues 153–165 (TDSSSADSDMTST) the composition is skewed to low complexity. Residues 299–401 (NNGIPINNKV…NSQSRTARAH (103 aa)) are RNA-binding. Residues 363-372 (NPSDEKKDSR) show a composition bias toward basic and acidic residues. The span at 373–412 (TYTNTTKPKSITRNSQKPNNSQSRTARAHNVSTSNNSSGP) shows a compositional bias: polar residues. The active-site For protease activity; shared with dimeric partner is the D461. The interval 583–640 (NVHTSESTRKYPYPFIHRMLAHANAQTIRYSLKNNTITYFNESDVDWSSAIDYQCPDC) is integrase-type zinc finger-like. The region spanning 660-835 (NSYEPFQYLH…AGLDISTLLP (176 aa)) is the Integrase catalytic domain. Residues D671 and D736 each contribute to the Mg(2+) site. Disordered stretches follow at residues 956–1120 (SKAV…TCPK) and 1146–1172 (DSFK…SNAY). A compositionally biased stretch (low complexity) spans 960–969 (SPTDSTPPST). Polar residues predominate over residues 1005–1015 (STPQISDIEST). The span at 1038 to 1053 (ESSHTSKSKDFRHSDS) shows a compositional bias: basic and acidic residues. 2 stretches are compositionally biased toward polar residues: residues 1054–1082 (YSDN…QTSE) and 1095–1106 (SIDTSSSESNSL). The short motif at 1178 to 1212 (KKRSLEDNETEIKVSRDTWNTKNMRSLEPPRSKKR) is the Bipartite nuclear localization signal element. One can recognise a Reverse transcriptase Ty1/copia-type domain in the interval 1338-1476 (NNYYITQLDI…DILGLEIKYQ (139 aa)). The Mg(2+) site is built by D1346, D1427, D1428, D1610, E1652, and D1685. Positions 1610-1752 (DASYGNQPYY…IKTFKLLTNK (143 aa)) constitute an RNase H Ty1/copia-type domain.

The capsid protein forms a homotrimer, from which the VLPs are assembled. The protease is a homodimer, whose active site consists of two apposed aspartic acid residues. Post-translationally, initially, virus-like particles (VLPs) are composed of the structural unprocessed proteins Gag and Gag-Pol, and also contain the host initiator methionine tRNA (tRNA(i)-Met) which serves as a primer for minus-strand DNA synthesis, and a dimer of genomic Ty RNA. Processing of the polyproteins occurs within the particle and proceeds by an ordered pathway, called maturation. First, the protease (PR) is released by autocatalytic cleavage of the Gag-Pol polyprotein yielding capsid protein p45 and a Pol-p154 precursor protein. This cleavage is a prerequisite for subsequent processing of Pol-p154 at the remaining sites to release the mature structural and catalytic proteins. Maturation takes place prior to the RT reaction and is required to produce transposition-competent VLPs.

It localises to the cytoplasm. The protein localises to the nucleus. It catalyses the reaction DNA(n) + a 2'-deoxyribonucleoside 5'-triphosphate = DNA(n+1) + diphosphate. It carries out the reaction Endonucleolytic cleavage to 5'-phosphomonoester.. Its function is as follows. Capsid protein (CA) is the structural component of the virus-like particle (VLP), forming the shell that encapsulates the retrotransposons dimeric RNA genome. The particles are assembled from trimer-clustered units and there are holes in the capsid shells that allow for the diffusion of macromolecules. CA also has nucleocapsid-like chaperone activity, promoting primer tRNA(i)-Met annealing to the multipartite primer-binding site (PBS), dimerization of Ty1 RNA and initiation of reverse transcription. The aspartyl protease (PR) mediates the proteolytic cleavages of the Gag and Gag-Pol polyproteins after assembly of the VLP. Functionally, reverse transcriptase/ribonuclease H (RT) is a multifunctional enzyme that catalyzes the conversion of the retro-elements RNA genome into dsDNA within the VLP. The enzyme displays a DNA polymerase activity that can copy either DNA or RNA templates, and a ribonuclease H (RNase H) activity that cleaves the RNA strand of RNA-DNA heteroduplexes during plus-strand synthesis and hydrolyzes RNA primers. The conversion leads to a linear dsDNA copy of the retrotransposon that includes long terminal repeats (LTRs) at both ends. In terms of biological role, integrase (IN) targets the VLP to the nucleus, where a subparticle preintegration complex (PIC) containing at least integrase and the newly synthesized dsDNA copy of the retrotransposon must transit the nuclear membrane. Once in the nucleus, integrase performs the integration of the dsDNA into the host genome. The sequence is that of Transposon Ty1-NL1 Gag-Pol polyprotein (TY1B-NL1) from Saccharomyces cerevisiae (strain ATCC 204508 / S288c) (Baker's yeast).